Reading from the N-terminus, the 529-residue chain is CRISPR-associated endodeoxyribonuclease Cas12f1 (529 aa).

Positions 1–95 are zinc finger domain (ZF); that stretch reads MAKNTITKTL…RGQFPDAVFW (95 aa). 4 residues coordinate Zn(2+): cysteine 50, histidine 53, cysteine 69, and cysteine 72. The segment at 96 to 192 is recognition domain (REC); sequence QEISEIFRQL…PTTKSDNFPI (97 aa). Residues 193–312 form a wedge domain (WED) region; sequence PLVKQKGGQY…MLNLSIDVPK (120 aa). Positions 313 to 321 are linker; the sequence is IDKGVDPSI. The segment at 322-473 is ruvC-I; the sequence is IGGIDVGVKS…RKVAPNNTSK (152 aa). Active-site residues include aspartate 326 and glutamate 422. The tract at residues 474–508 is target nucleic acid-binding (TNB); it reads TCSKCGHLNNYFNFEYRKKNKFPHFKCEKCNFKEN. Zn(2+) is bound by residues cysteine 475 and cysteine 478. The active site involves arginine 490. Residues cysteine 500 and cysteine 503 each contribute to the Zn(2+) site. The segment at 509 to 529 is ruvC-II; the sequence is ADYNAALNISNPKLKSTKEEP. The active site involves aspartate 510.

Belongs to the CRISPR-associated endonuclease Cas12f family. As to quaternary structure, an asymmetric homodimer. Guide RNA is probably required for dimerization. Requires Mg(2+) as cofactor. The cofactor is Zn(2+).

Target ssDNA cleavage is inhibited by EDTA. Activity is maximal with 5-50 mM NaCl, is less efficient at higher NaCl concentrations. CRISPR (clustered regularly interspaced short palindromic repeat), is an adaptive immune system that provides protection against mobile genetic elements (viruses, transposable elements and conjugative plasmids). CRISPR clusters contain sequences complementary to antecedent mobile elements and target invading nucleic acids. CRISPR clusters are transcribed and processed into CRISPR RNA (crRNA), which requires a trans-encoded small RNA (tracrRNA), but not this protein (in vitro). Upon expression in E.coli of this protein, a mini CRISPR array and the probable tracrRNA, the protein associates with both RNAs. The mini system is not active in E.coli against phiX174 phage, nor is it active in protection against transformation by foreign plasmids. In vitro the purified protein-tracrRNA-crRNA complex cleaves ssDNA complementary to the crRNA; target cleavage requires both tracrRNA and crRNA, but not a protospacer adjacent motif (PAM). The tracrRNA-crRNA can be replaced by a single guide RNA (sgRNA). 2-nucleotide mismatches in the middle of the crRNA:DNA heteroduplex decrease cleavage. Cleavage occurs just downstream of the heteroduplex. Activation of this protein results in non-specific ssDNA degradation in vitro. In vitro and in E.coli (coexpressed with sgRNA) has dsDNA endonuclease activity, recognizing the 5' PAM sequence TTTR; both sgRNA and a PAM are required for activity. Cleaves the target strand 24 and the nontarget strand 22 bases upstream of the PAM (respectively), resulting in 5' overhangs. The 2 monomers interact differently with the sgRNA and target DNA. Mutagenesis of a dimeric construct shows that one of the RuvC monomers probably cleaves both DNA strands. The sequence is that of CRISPR-associated endodeoxyribonuclease Cas12f1 from Uncultured archaeon.